The following is a 408-amino-acid chain: Probable pectate lyase 5 (408 aa).

The signal sequence occupies residues 1–27 (MRMTLVHLSLSLFSCLLLVLSPTFIAS). N-linked (GlcNAc...) asparagine glycosylation occurs at asparagine 45. Ca(2+)-binding residues include aspartate 206, aspartate 230, and aspartate 234. Residue arginine 286 is part of the active site.

Belongs to the polysaccharide lyase 1 family. It depends on Ca(2+) as a cofactor.

The catalysed reaction is Eliminative cleavage of (1-&gt;4)-alpha-D-galacturonan to give oligosaccharides with 4-deoxy-alpha-D-galact-4-enuronosyl groups at their non-reducing ends.. The protein operates within glycan metabolism; pectin degradation; 2-dehydro-3-deoxy-D-gluconate from pectin: step 2/5. The chain is Probable pectate lyase 5 from Arabidopsis thaliana (Mouse-ear cress).